The sequence spans 264 residues: Tryptophan synthase alpha chain (264 aa).

Catalysis depends on proton acceptor residues Glu49 and Asp60.

The protein belongs to the TrpA family. In terms of assembly, tetramer of two alpha and two beta chains.

It carries out the reaction (1S,2R)-1-C-(indol-3-yl)glycerol 3-phosphate + L-serine = D-glyceraldehyde 3-phosphate + L-tryptophan + H2O. Its pathway is amino-acid biosynthesis; L-tryptophan biosynthesis; L-tryptophan from chorismate: step 5/5. The alpha subunit is responsible for the aldol cleavage of indoleglycerol phosphate to indole and glyceraldehyde 3-phosphate. This chain is Tryptophan synthase alpha chain, found in Microcystis aeruginosa (strain NIES-843 / IAM M-2473).